A 216-amino-acid chain; its full sequence is Ras-like protein (216 aa).

16–23 (GGGGVGKS) is a GTP binding site. Residues 38–46 (YDPTIEDSY) carry the Effector region motif. Residues 63–67 (DTAGQ) and 122–125 (NKCD) contribute to the GTP site. S-palmitoyl cysteine attachment occurs at residues Cys209 and Cys210. A Cysteine methyl ester modification is found at Cys213. A lipid anchor (S-geranylgeranyl cysteine) is attached at Cys213. Residues 214–216 (VVL) constitute a propeptide, removed in mature form.

This sequence belongs to the small GTPase superfamily. Ras family.

The protein resides in the cell membrane. It carries out the reaction GTP + H2O = GDP + phosphate + H(+). With respect to regulation, alternates between an inactive form bound to GDP and an active form bound to GTP. Activated by a guanine nucleotide-exchange factor (GEF) and inactivated by a GTPase-activating protein (GAP). The sequence is that of Ras-like protein (RAS1) from Cryptococcus neoformans var. neoformans serotype D (strain B-3501A) (Filobasidiella neoformans).